The primary structure comprises 90 residues: DNA-binding protein HU-1 (90 aa).

Residue Thr4 is modified to Phosphothreonine.

The protein belongs to the bacterial histone-like protein family. In terms of assembly, homodimer.

Functionally, histone-like DNA-binding protein which is capable of wrapping DNA to stabilize it, and thus to prevent its denaturation under extreme environmental conditions. This chain is DNA-binding protein HU-1 (hup2), found in Halalkalibacterium halodurans (strain ATCC BAA-125 / DSM 18197 / FERM 7344 / JCM 9153 / C-125) (Bacillus halodurans).